We begin with the raw amino-acid sequence, 819 residues long: Aminopeptidase O (819 aa).

Residue H479 coordinates Zn(2+). E480 acts as the Proton acceptor in catalysis. H483 and E502 together coordinate Zn(2+). The Nucleolar localization signal motif lies at 689–699 (RRPRKRKRREK).

It belongs to the peptidase M1 family. The cofactor is Zn(2+).

It is found in the nucleus. The protein localises to the nucleolus. Its subcellular location is the cytoplasm. Functionally, aminopeptidase which catalyzes the hydrolysis of amino acid residues from the N-terminus of peptide or protein substrates. The polypeptide is Aminopeptidase O (Homo sapiens (Human)).